Consider the following 247-residue polypeptide: Peroxisomal membrane protein 11A (247 aa).

The Cytoplasmic segment spans residues 1–83; the sequence is MDAFIRFTNQ…SVRATDLVPR (83 aa). A helical membrane pass occupies residues 84–105; it reads ICLTLASLNRVIYFICDTVLFV. Topologically, residues 106–219 are lumenal; that stretch reads RSTGLASGVN…DQLGIYKSNP (114 aa). The helical transmembrane segment at 220-239 threads the bilayer; it reads GIIGLGGLVSSVAGIITVAY. A required for homodimerization, interaction with PEX11G, and peroxisomal localization region spans residues 220-239; sequence GIIGLGGLVSSVAGIITVAY. The Cytoplasmic portion of the chain corresponds to 240–247; it reads PQMKLKTQ.

Belongs to the peroxin-11 family. As to quaternary structure, homodimer. Heterodimer with PEX11G. Probably interacts with COPB2 and COPA. Interacts with PEX19. Interacts with FIS1.

Its subcellular location is the peroxisome membrane. May be involved in peroxisomal proliferation and may regulate peroxisomes division. May mediate binding of coatomer proteins to the peroxisomal membrane. Promotes membrane protrusion and elongation on the peroxisomal surface. This Bos taurus (Bovine) protein is Peroxisomal membrane protein 11A (PEX11A).